Here is a 384-residue protein sequence, read N- to C-terminus: S-adenosylmethionine synthase (384 aa).

His15 serves as a coordination point for ATP. Residue Asp17 coordinates Mg(2+). Glu43 provides a ligand contact to K(+). Glu56 and Gln99 together coordinate L-methionine. Positions 99 to 109 (QSPDINQGVDR) are flexible loop. Residues 164–166 (DAK), 230–231 (RF), Asp239, 245–246 (RK), Ala262, and Lys266 contribute to the ATP site. Asp239 is an L-methionine binding site. Lys270 contributes to the L-methionine binding site.

It belongs to the AdoMet synthase family. In terms of assembly, homotetramer; dimer of dimers. The cofactor is Mg(2+). K(+) is required as a cofactor.

The protein resides in the cytoplasm. The catalysed reaction is L-methionine + ATP + H2O = S-adenosyl-L-methionine + phosphate + diphosphate. It functions in the pathway amino-acid biosynthesis; S-adenosyl-L-methionine biosynthesis; S-adenosyl-L-methionine from L-methionine: step 1/1. Its function is as follows. Catalyzes the formation of S-adenosylmethionine (AdoMet) from methionine and ATP. The overall synthetic reaction is composed of two sequential steps, AdoMet formation and the subsequent tripolyphosphate hydrolysis which occurs prior to release of AdoMet from the enzyme. The chain is S-adenosylmethionine synthase from Erwinia tasmaniensis (strain DSM 17950 / CFBP 7177 / CIP 109463 / NCPPB 4357 / Et1/99).